The sequence spans 353 residues: MTAILERRESTSLWGRFCNWVTSTENRLYIGWFGVLMIPTLLTATSVFIIAFIAAPPVDIDGIREPVSGSLLYGNNIISGAIVPTSAAIGLHFYPIWEASSVDEWLYNGGPYELIVLHFLLGVACYMGREWELSFRLGMRPWIAVAYSAPVAAATAVFLIYPIGQGSFSDGMPLGISGTFNFMIVFQAEHNILMHPFHMLGVAGVFGGSLFSAMHGSLVTSSLIRETTENESANEGYRFGQEEETYNIVAAHGYFGRLIFQYASFNNSRSLHFFLAAWPVVGIWFTALGISTMAFNLNGFNFNQSVVDSQGRVINTWADIINRANLGMEVMHERNAHNFPLDLAAVEAPSTNG.

N-acetylthreonine is present on threonine 2. Threonine 2 carries the phosphothreonine modification. 3 consecutive transmembrane segments (helical) span residues 29–46, 118–133, and 142–156; these read YIGW…TATS, HFLL…EWEL, and WIAV…AATA. Histidine 118 is a binding site for chlorophyll a. Position 126 (tyrosine 126) interacts with pheophytin a. 2 residues coordinate [CaMn4O5] cluster: aspartate 170 and glutamate 189. Residues 197–218 form a helical membrane-spanning segment; sequence FHMLGVAGVFGGSLFSAMHGSL. Histidine 198 contributes to the chlorophyll a binding site. A quinone contacts are provided by residues histidine 215 and 264–265; that span reads SF. Histidine 215 is a binding site for Fe cation. Position 272 (histidine 272) interacts with Fe cation. A helical transmembrane segment spans residues 274–288; it reads FLAAWPVVGIWFTAL. Residues histidine 332, glutamate 333, aspartate 342, and alanine 344 each contribute to the [CaMn4O5] cluster site. Positions 345 to 353 are excised as a propeptide; sequence AVEAPSTNG.

Belongs to the reaction center PufL/M/PsbA/D family. PSII is composed of 1 copy each of membrane proteins PsbA, PsbB, PsbC, PsbD, PsbE, PsbF, PsbH, PsbI, PsbJ, PsbK, PsbL, PsbM, PsbT, PsbX, PsbY, PsbZ, Psb30/Ycf12, at least 3 peripheral proteins of the oxygen-evolving complex and a large number of cofactors. It forms dimeric complexes. Requires The D1/D2 heterodimer binds P680, chlorophylls that are the primary electron donor of PSII, and subsequent electron acceptors. It shares a non-heme iron and each subunit binds pheophytin, quinone, additional chlorophylls, carotenoids and lipids. D1 provides most of the ligands for the Mn4-Ca-O5 cluster of the oxygen-evolving complex (OEC). There is also a Cl(-1) ion associated with D1 and D2, which is required for oxygen evolution. The PSII complex binds additional chlorophylls, carotenoids and specific lipids. as cofactor. In terms of processing, tyr-161 forms a radical intermediate that is referred to as redox-active TyrZ, YZ or Y-Z. Post-translationally, C-terminally processed by CTPA; processing is essential to allow assembly of the oxygen-evolving complex and thus photosynthetic growth.

The protein localises to the plastid. Its subcellular location is the chloroplast thylakoid membrane. The enzyme catalyses 2 a plastoquinone + 4 hnu + 2 H2O = 2 a plastoquinol + O2. Functionally, photosystem II (PSII) is a light-driven water:plastoquinone oxidoreductase that uses light energy to abstract electrons from H(2)O, generating O(2) and a proton gradient subsequently used for ATP formation. It consists of a core antenna complex that captures photons, and an electron transfer chain that converts photonic excitation into a charge separation. The D1/D2 (PsbA/PsbD) reaction center heterodimer binds P680, the primary electron donor of PSII as well as several subsequent electron acceptors. This chain is Photosystem II protein D1, found in Nymphaea alba (White water-lily).